The sequence spans 505 residues: Transcription factor VHR2 (505 aa).

Basic and acidic residues predominate over residues 1 to 16 (MIDDTENSKIHLEGSH). Disordered stretches follow at residues 1–23 (MIDD…KYTG), 105–179 (NRKR…LPYP), and 421–460 (QSNP…STSA). A compositionally biased stretch (low complexity) spans 133–148 (PSSSNMGSCSASNASS). Residues 421-443 (QSNPMRPHSTSEVLSAHSSTKDA) are compositionally biased toward polar residues.

This sequence belongs to the VHR1 family.

It is found in the nucleus. In terms of biological role, transcription factor that regulates ERG9, but seems to have a more global function in transcription. This is Transcription factor VHR2 (VHR2) from Saccharomyces cerevisiae (strain ATCC 204508 / S288c) (Baker's yeast).